The primary structure comprises 84 residues: Small ribosomal subunit protein bS20 (84 aa).

It belongs to the bacterial ribosomal protein bS20 family.

Binds directly to 16S ribosomal RNA. This is Small ribosomal subunit protein bS20 from Lacticaseibacillus casei (strain BL23) (Lactobacillus casei).